We begin with the raw amino-acid sequence, 254 residues long: 5-keto-D-gluconate 5-reductase (254 aa).

13 to 37 (LITGSAQGIGFLLATGLGKYGAQII) contacts NADP(+). S145 contacts substrate. The active-site Proton acceptor is the Y158.

It belongs to the short-chain dehydrogenases/reductases (SDR) family.

It carries out the reaction D-gluconate + NAD(+) = 5-dehydro-D-gluconate + NADH + H(+). The catalysed reaction is D-gluconate + NADP(+) = 5-dehydro-D-gluconate + NADPH + H(+). It participates in carbohydrate acid metabolism; L-idonate degradation. Functionally, catalyzes the reduction of 5-keto-D-gluconate to D-gluconate, using either NADH or NADPH. Is likely involved in an L-idonate degradation pathway that allows E.coli to utilize L-idonate as the sole carbon and energy source. Is also able to catalyze the reverse reaction in vitro, but the D-gluconate oxidation by the enzyme can only proceed with NAD. The polypeptide is 5-keto-D-gluconate 5-reductase (Escherichia coli O6:H1 (strain CFT073 / ATCC 700928 / UPEC)).